Consider the following 112-residue polypeptide: Histone H2A, sperm (112 aa).

The residue at position 91 (glutamine 91) is an N5-methylglutamine. Lysine 106 is covalently cross-linked (Glycyl lysine isopeptide (Lys-Gly) (interchain with G-Cter in ubiquitin)).

Belongs to the histone H2A family. As to quaternary structure, the nucleosome is a histone octamer containing two molecules each of H2A, H2B, H3 and H4 assembled in one H3-H4 heterotetramer and two H2A-H2B heterodimers. The octamer wraps approximately 147 bp of DNA. Post-translationally, monoubiquitination gives a specific tag for epigenetic transcriptional repression.

The protein localises to the nucleus. The protein resides in the chromosome. In terms of biological role, core component of nucleosome. Nucleosomes wrap and compact DNA into chromatin, limiting DNA accessibility to the cellular machineries which require DNA as a template. Histones thereby play a central role in transcription regulation, DNA repair, DNA replication and chromosomal stability. DNA accessibility is regulated via a complex set of post-translational modifications of histones, also called histone code, and nucleosome remodeling. The sequence is that of Histone H2A, sperm from Lytechinus pictus (Painted sea urchin).